A 348-amino-acid chain; its full sequence is 5-deoxyribose 1-phosphate isomerase (348 aa).

Residues 49–51 (RGA), Arg92, and Gln199 contribute to the substrate site. Asp240 acts as the Proton donor in catalysis. Substrate is bound at residue 250–251 (NK).

This sequence belongs to the EIF-2B alpha/beta/delta subunits family. DrdI subfamily. As to quaternary structure, homodimer.

The enzyme catalyses 5-deoxy-alpha-D-ribose 1-phosphate = 5-deoxy-D-ribulose 1-phosphate. It carries out the reaction 5-(methylsulfanyl)-alpha-D-ribose 1-phosphate = 5-(methylsulfanyl)-D-ribulose 1-phosphate. Its pathway is carbohydrate degradation. Functionally, catalyzes the isomerization of 5-deoxy-alpha-D-ribose 1-phosphate to 5-deoxy-D-ribulose 1-phosphate, as part of a 5-deoxyribose salvage pathway that recycles this toxic radical SAM enzyme by-product to mainstream metabolites. Also seems to be able to catalyze the conversion of methylthioribose-1-phosphate (MTR-1-P) into methylthioribulose-1-phosphate (MTRu-1-P). However this enzyme may not function in methionine salvage in B.thuringiensis since it exists a paralog (MtnA) present in the methionine salvage pathway cluster. This Bacillus thuringiensis serovar kurstaki (strain ATCC 35866 / NRRL B-4488 / HD73) protein is 5-deoxyribose 1-phosphate isomerase.